Here is a 123-residue protein sequence, read N- to C-terminus: Large ribosomal subunit protein bL12 (123 aa).

It belongs to the bacterial ribosomal protein bL12 family. In terms of assembly, homodimer. Part of the ribosomal stalk of the 50S ribosomal subunit. Forms a multimeric L10(L12)X complex, where L10 forms an elongated spine to which 2 to 4 L12 dimers bind in a sequential fashion. Binds GTP-bound translation factors.

Functionally, forms part of the ribosomal stalk which helps the ribosome interact with GTP-bound translation factors. Is thus essential for accurate translation. In Laribacter hongkongensis (strain HLHK9), this protein is Large ribosomal subunit protein bL12.